The following is a 236-amino-acid chain: LHFPL tetraspan subfamily member 3 protein (236 aa).

A run of 4 helical transmembrane segments spans residues Ile36–Ile56, Phe110–Phe130, Ile140–Pro160, and Ile191–Gly211.

It belongs to the LHFP family.

Its subcellular location is the membrane. This is LHFPL tetraspan subfamily member 3 protein from Homo sapiens (Human).